The primary structure comprises 68 residues: Large ribosomal subunit protein bL33c (68 aa).

It belongs to the bacterial ribosomal protein bL33 family.

It is found in the plastid. The protein localises to the chloroplast. This is Large ribosomal subunit protein bL33c from Nymphaea alba (White water-lily).